Consider the following 471-residue polypeptide: MAQSVADVMKLVKENDVKFVDFRFTDTKGKEQHVSVPTSHFDDDKFESGHAFDGSSIAGWKGIEASDMLLMPDSNTAFIDPFYEEPTLVLTCDVVEPSDGKGYDRDPRSIAKRAEAYLKSTGLGDTAFFGPEPEFFIFDGVTWNVDMQGCFVKVHSEEAPWSSGKEFEHGNSGHRPGKKGGYFPVAPIDTFQDMRSEMCLILESLGIPVEVHHHEVAGQGQNEIGTRFSTLVQRADWTQLQKYVIQNVAHTYGKTATFMPKPIVGDNGSGMHVHQSVWKDGQNLFAGNGYAGLSEFALYYIGGIIKHARALNAITNPGTNSYKRLVPGFEAPVKLAYSARNRSASIRIPYVANPKGRRIETRFPDPLMNPYLGFSALLMAGLDGVMNKIHPGEAADKNLYDLPPEEDAKIPTVCNSLDQSLEYLDNDREFLTRGGVFSNSMLDAYIELKMEEVTRFRMTTHPVEFEMYYSL.

The 86-residue stretch at 15–100 (NDVKFVDFRF…TCDVVEPSDG (86 aa)) folds into the GS beta-grasp domain. One can recognise a GS catalytic domain in the interval 107–471 (PRSIAKRAEA…PVEFEMYYSL (365 aa)).

It belongs to the glutamine synthetase family.

It catalyses the reaction 3-hydroxyaminophenol = aminohydroquinone. Its activity is regulated as follows. Is inhibited by H(2)O(2). 1,10-phenanthroline inhibits the activity slightly, but other metal cation chelators such as EDTA or tiron have no effect on the activity. Divalent metal cations and hydroxylamine have also no effect on the activity. Due to the relationship of the protein with glutamine synthetases, glutamate and glutamine were tested as inhibitors; neither preincubation of the compounds with the enzyme nor their addition to the assay buffer affected 3HAP mutase activity. In terms of biological role, catalyzes the isomerization of 3-hydroxylaminophenol (3HAP) to aminohydroquinone, a step in the degradative pathway of 3-nitrophenol. The enzymatic reaction is regiospecific since it leads to the formation of aminohydroquinone exclusively, without producing the isomeric 4-aminocatechol. Can also isomerize other hydroxylaminoaromatic compounds, such as hydroxylaminobenzene to a mixture of 2-aminophenol and 4-aminophenol, 4-hydroxylaminotoluene to 6-amino-m-cresol, and 2-chloro-5-hydroxylaminophenol to 2-amino-5-chlorohydroquinone. Does not act on 4-hydroxylaminobenzoate. The sequence is that of 3-hydroxylaminophenol mutase from Cupriavidus pinatubonensis (strain JMP 134 / LMG 1197) (Cupriavidus necator (strain JMP 134)).